Here is a 357-residue protein sequence, read N- to C-terminus: Tetraacyldisaccharide 4'-kinase (357 aa).

An ATP-binding site is contributed by 54–61 (TVGGAGKT).

The protein belongs to the LpxK family.

The enzyme catalyses a lipid A disaccharide + ATP = a lipid IVA + ADP + H(+). Its pathway is glycolipid biosynthesis; lipid IV(A) biosynthesis; lipid IV(A) from (3R)-3-hydroxytetradecanoyl-[acyl-carrier-protein] and UDP-N-acetyl-alpha-D-glucosamine: step 6/6. In terms of biological role, transfers the gamma-phosphate of ATP to the 4'-position of a tetraacyldisaccharide 1-phosphate intermediate (termed DS-1-P) to form tetraacyldisaccharide 1,4'-bis-phosphate (lipid IVA). The sequence is that of Tetraacyldisaccharide 4'-kinase from Rhizobium leguminosarum bv. trifolii (strain WSM2304).